A 597-amino-acid polypeptide reads, in one-letter code: Aspartate--tRNA(Asp/Asn) ligase (597 aa).

Glu172 contacts L-aspartate. The aspartate stretch occupies residues 196–199 (QLFK). Residue Arg218 coordinates L-aspartate. ATP-binding positions include 218 to 220 (RDE) and Gln227. His454 serves as a coordination point for L-aspartate. Glu488 contributes to the ATP binding site. Arg495 lines the L-aspartate pocket. Position 540–543 (540–543 (GLDR)) interacts with ATP.

This sequence belongs to the class-II aminoacyl-tRNA synthetase family. Type 1 subfamily. In terms of assembly, homodimer.

It localises to the cytoplasm. It catalyses the reaction tRNA(Asx) + L-aspartate + ATP = L-aspartyl-tRNA(Asx) + AMP + diphosphate. In terms of biological role, aspartyl-tRNA synthetase with relaxed tRNA specificity since it is able to aspartylate not only its cognate tRNA(Asp) but also tRNA(Asn). Reaction proceeds in two steps: L-aspartate is first activated by ATP to form Asp-AMP and then transferred to the acceptor end of tRNA(Asp/Asn). The chain is Aspartate--tRNA(Asp/Asn) ligase from Chromobacterium violaceum (strain ATCC 12472 / DSM 30191 / JCM 1249 / CCUG 213 / NBRC 12614 / NCIMB 9131 / NCTC 9757 / MK).